Consider the following 118-residue polypeptide: Holo-[acyl-carrier-protein] synthase (118 aa).

Residues Asp-8 and Glu-60 each coordinate Mg(2+).

This sequence belongs to the P-Pant transferase superfamily. AcpS family. The cofactor is Mg(2+).

The protein resides in the cytoplasm. It carries out the reaction apo-[ACP] + CoA = holo-[ACP] + adenosine 3',5'-bisphosphate + H(+). Functionally, transfers the 4'-phosphopantetheine moiety from coenzyme A to a Ser of acyl-carrier-protein. The protein is Holo-[acyl-carrier-protein] synthase of Wolbachia sp. subsp. Drosophila simulans (strain wRi).